Consider the following 94-residue polypeptide: Large ribosomal subunit protein uL23 (94 aa).

This sequence belongs to the universal ribosomal protein uL23 family. As to quaternary structure, part of the 50S ribosomal subunit. Contacts protein L29, and trigger factor when it is bound to the ribosome.

Its function is as follows. One of the early assembly proteins it binds 23S rRNA. One of the proteins that surrounds the polypeptide exit tunnel on the outside of the ribosome. Forms the main docking site for trigger factor binding to the ribosome. The protein is Large ribosomal subunit protein uL23 of Exiguobacterium sibiricum (strain DSM 17290 / CCUG 55495 / CIP 109462 / JCM 13490 / 255-15).